The chain runs to 308 residues: 4-hydroxy-tetrahydrodipicolinate synthase (308 aa).

T56 serves as a coordination point for pyruvate. The active-site Proton donor/acceptor is Y144. Residue K172 is the Schiff-base intermediate with substrate of the active site. V212 contributes to the pyruvate binding site.

The protein belongs to the DapA family. In terms of assembly, homotetramer; dimer of dimers.

The protein resides in the cytoplasm. The enzyme catalyses L-aspartate 4-semialdehyde + pyruvate = (2S,4S)-4-hydroxy-2,3,4,5-tetrahydrodipicolinate + H2O + H(+). It participates in amino-acid biosynthesis; L-lysine biosynthesis via DAP pathway; (S)-tetrahydrodipicolinate from L-aspartate: step 3/4. Its function is as follows. Catalyzes the condensation of (S)-aspartate-beta-semialdehyde [(S)-ASA] and pyruvate to 4-hydroxy-tetrahydrodipicolinate (HTPA). The chain is 4-hydroxy-tetrahydrodipicolinate synthase from Kineococcus radiotolerans (strain ATCC BAA-149 / DSM 14245 / SRS30216).